A 512-amino-acid chain; its full sequence is Respiratory nitrate reductase 1 beta chain (512 aa).

4Fe-4S ferredoxin-type domains are found at residues Val-7 to Gly-35, Thr-175 to Glu-206, and Gly-208 to Lys-237. Residues Cys-16, Cys-19, Cys-22, Cys-26, Cys-184, Cys-187, and Cys-192 each contribute to the [4Fe-4S] cluster site. 3 residues coordinate [3Fe-4S] cluster: Cys-196, Cys-217, and Cys-223. [4Fe-4S] cluster is bound by residues Cys-227, Cys-244, Cys-247, Cys-259, and Cys-263.

As to quaternary structure, dimer of heterotrimers each composed of an alpha, a beta and a gamma chain. Alpha and beta are catalytic chains; gamma chains are involved in binding the enzyme complex to the cytoplasmic membrane. The cofactor is [4Fe-4S] cluster. [3Fe-4S] cluster serves as cofactor.

The protein resides in the cell membrane. The enzyme catalyses nitrate + a quinol = a quinone + nitrite + H2O. Its function is as follows. The nitrate reductase enzyme complex allows S.flexneri to use nitrate as an electron acceptor during anaerobic growth. The beta chain is an electron transfer unit containing four cysteine clusters involved in the formation of iron-sulfur centers. Electrons are transferred from the gamma chain to the molybdenum cofactor of the alpha subunit. This Shigella flexneri protein is Respiratory nitrate reductase 1 beta chain (narH).